A 398-amino-acid chain; its full sequence is Phosphoglycerate kinase (398 aa).

Substrate contacts are provided by residues 21-23, Arg-36, 59-62, Arg-119, and Arg-157; these read DFN and HLGR. ATP-binding positions include Lys-208, Gly-296, Glu-327, and 354–357; that span reads GGDS.

Belongs to the phosphoglycerate kinase family. As to quaternary structure, monomer.

The protein localises to the cytoplasm. It catalyses the reaction (2R)-3-phosphoglycerate + ATP = (2R)-3-phospho-glyceroyl phosphate + ADP. It participates in carbohydrate degradation; glycolysis; pyruvate from D-glyceraldehyde 3-phosphate: step 2/5. This chain is Phosphoglycerate kinase, found in Lactococcus lactis subsp. cremoris (strain MG1363).